The primary structure comprises 539 residues: Chaperonin GroEL (539 aa).

Residues 29–32, 86–90, Gly-413, and Asp-492 each bind ATP; these read TLGP and DGTTT.

Belongs to the chaperonin (HSP60) family. In terms of assembly, forms a cylinder of 14 subunits composed of two heptameric rings stacked back-to-back. Interacts with the co-chaperonin GroES.

It is found in the cytoplasm. The catalysed reaction is ATP + H2O + a folded polypeptide = ADP + phosphate + an unfolded polypeptide.. Functionally, together with its co-chaperonin GroES, plays an essential role in assisting protein folding. The GroEL-GroES system forms a nano-cage that allows encapsulation of the non-native substrate proteins and provides a physical environment optimized to promote and accelerate protein folding. The protein is Chaperonin GroEL of Fusobacterium nucleatum subsp. polymorphum (Fusobacterium polymorphum).